We begin with the raw amino-acid sequence, 421 residues long: MDLENKVKKMGLGHEQGFGAPCLKCKEKCEGFELHFWRKICRNCKCGQEEHDVLLSNEEDRKVGKLFEDTKYTTLIAKLKSDGIPMYKRNVMILTNPVAAKKNVSINTVTYEWAPPVQNQALARQYMQMLPKEKQPVAGSEGAQYRKKQLAKQLPAHDQDPSKCHELSPREVNEMEQFVKKYKSEALGVGDVKLPCEMDAQVPKQMNIPGGDRSTPAAVGAMEDKSAEHKRTQYSCYCCKLSMKEGDPAIYAERAGYDKLWHPACFVCSTCHELLVDMIYFWKNEKLYCGRHYCDSEKPRCAGCDELIFSNEYTQAENQNWHLKHFCCFDCDSILAGEIYVMVNDKPVCKPCYVKNHAVVCQGCHNAIDPEVQRVTYNNFSWHASTECFLCSCCSKCLIGQKFMPVEGMVFCSVECKKRMS.

The 108-residue stretch at 92–199 (MILTNPVAAK…GDVKLPCEMD (108 aa)) folds into the PET domain. 3 LIM zinc-binding domains span residues 234 to 297 (YSCY…CDSE), 299 to 359 (PRCA…NHAV), and 362 to 421 (QGCH…KRMS).

The protein belongs to the prickle / espinas / testin family. Interacts via LIM domain 1 with ZYX. Interacts (via LIM domain 3) with ENAH and VASP. Interacts with ALKBH4, talin, actin, alpha-actinin, GRIP1 and PXN. Interacts (via LIM domain 2) with ACTL7A (via N-terminus). Heterodimer with ACTL7A; the heterodimer interacts with ENAH to form a heterotrimer.

It is found in the cytoplasm. It localises to the cell junction. Its subcellular location is the focal adhesion. Scaffold protein that may play a role in cell adhesion, cell spreading and in the reorganization of the actin cytoskeleton. Plays a role in the regulation of cell proliferation. May act as a tumor suppressor. This chain is Testin (TES), found in Nomascus leucogenys (Northern white-cheeked gibbon).